The sequence spans 1828 residues: Unconventional myosin-Va (1828 aa).

N-acetylalanine is present on Ala-2. The Myosin N-terminal SH3-like domain occupies Thr-8 to Pro-60. The region spanning Val-69–Ala-763 is the Myosin motor domain. Gly-163 to Thr-170 provides a ligand contact to ATP. The disordered stretch occupies residues Ile-599–Lys-633. A Phosphoserine modification is found at Ser-600. The segment covering Ser-600–Thr-610 has biased composition (polar residues). The actin-binding stretch occupies residues Leu-643–Asp-665. IQ domains lie at Leu-766–Cys-788, Met-789–Arg-813, Arg-814–Ile-836, Arg-837–Leu-861, Arg-862–Arg-884, and Thr-885–Ser-914. Coiled coils occupy residues Ser-914 to Ala-1239 and Gly-1314 to Val-1418. Residue Thr-1032 is modified to Phosphothreonine. Residues Val-1105 to Lys-1147 form a disordered region. Polar residues predominate over residues Thr-1116 to Phe-1130. The segment covering Ile-1136–Lys-1147 has biased composition (basic and acidic residues). 2 positions are modified to phosphoserine: Ser-1425 and Ser-1625. In terms of domain architecture, Dilute spans Thr-1507 to Asp-1783. The residue at position 1733 (Thr-1733) is a Phosphothreonine.

Belongs to the TRAFAC class myosin-kinesin ATPase superfamily. Myosin family. In terms of assembly, may be a homodimer, which associates with multiple calmodulin or myosin light chains. Interacts with RIPL2, the interaction is required for its role in dendrite formation. Interacts with MLPH. Interacts with SYTL4. Interacts with MYRIP. Interacts with RAB10; mediates the transport to the plasma membrane of SLC2A4/GLUT4 storage vesicles. Interacts with FMR1; this interaction occurs in association with polyribosome.

It catalyses the reaction ATP + H2O = ADP + phosphate + H(+). Its function is as follows. Processive actin-based motor that can move in large steps approximating the 36-nm pseudo-repeat of the actin filament. Can hydrolyze ATP in the presence of actin, which is essential for its function as a motor protein. Involved in melanosome transport. Also mediates the transport of vesicles to the plasma membrane. May also be required for some polarization process involved in dendrite formation. This Rattus norvegicus (Rat) protein is Unconventional myosin-Va (Myo5a).